A 259-amino-acid polypeptide reads, in one-letter code: Proteasome subunit alpha (259 aa).

The protein belongs to the peptidase T1A family. The 20S proteasome core is composed of 14 alpha and 14 beta subunits that assemble into four stacked heptameric rings, resulting in a barrel-shaped structure. The two inner rings, each composed of seven catalytic beta subunits, are sandwiched by two outer rings, each composed of seven alpha subunits. The catalytic chamber with the active sites is on the inside of the barrel. Has a gated structure, the ends of the cylinder being occluded by the N-termini of the alpha-subunits. Is capped at one or both ends by the proteasome regulatory ATPase, PAN.

The protein localises to the cytoplasm. Its activity is regulated as follows. The formation of the proteasomal ATPase PAN-20S proteasome complex, via the docking of the C-termini of PAN into the intersubunit pockets in the alpha-rings, triggers opening of the gate for substrate entry. Interconversion between the open-gate and close-gate conformations leads to a dynamic regulation of the 20S proteasome proteolysis activity. In terms of biological role, component of the proteasome core, a large protease complex with broad specificity involved in protein degradation. The chain is Proteasome subunit alpha from Methanococcus maripaludis (strain C6 / ATCC BAA-1332).